The following is a 298-amino-acid chain: GTP cyclohydrolase FolE2 (298 aa).

The protein belongs to the GTP cyclohydrolase IV family.

The enzyme catalyses GTP + H2O = 7,8-dihydroneopterin 3'-triphosphate + formate + H(+). It functions in the pathway cofactor biosynthesis; 7,8-dihydroneopterin triphosphate biosynthesis; 7,8-dihydroneopterin triphosphate from GTP: step 1/1. Functionally, converts GTP to 7,8-dihydroneopterin triphosphate. In Pseudomonas aeruginosa (strain UCBPP-PA14), this protein is GTP cyclohydrolase FolE2.